Here is a 238-residue protein sequence, read N- to C-terminus: Ribosomal RNA small subunit methyltransferase G (238 aa).

S-adenosyl-L-methionine contacts are provided by residues Gly-77, Phe-82, 128–129 (AE), and Arg-147.

This sequence belongs to the methyltransferase superfamily. RNA methyltransferase RsmG family.

The protein localises to the cytoplasm. Functionally, specifically methylates the N7 position of guanine in position 535 of 16S rRNA. In Geobacillus kaustophilus (strain HTA426), this protein is Ribosomal RNA small subunit methyltransferase G.